We begin with the raw amino-acid sequence, 260 residues long: Protein SVS1 (260 aa).

A signal peptide spans 1-19 (MIFKILCSLLLVTSNFASA). Residues asparagine 23, asparagine 249, and asparagine 256 are each glycosylated (N-linked (GlcNAc...) asparagine).

Required for vanadate resistance. This Saccharomyces cerevisiae (strain ATCC 204508 / S288c) (Baker's yeast) protein is Protein SVS1 (SVS1).